Here is a 908-residue protein sequence, read N- to C-terminus: Adhesion G-protein coupled receptor F1 (908 aa).

The signal sequence occupies residues 1 to 20 (MRIGLLWLVPLFTLTEGTDG). Over 21–588 (FLQQKNDGRR…VVPVVKWITY (568 aa)) the chain is Extracellular. Asparagine 133, asparagine 167, asparagine 328, asparagine 353, asparagine 367, asparagine 388, asparagine 422, asparagine 453, asparagine 510, asparagine 519, asparagine 526, and asparagine 551 each carry an N-linked (GlcNAc...) asparagine glycan. The region spanning 147–255 (ERAKVWGTFE…GSFRVFGKAP (109 aa)) is the SEA domain. A GAIN-B domain is found at 434-577 (PVTQIQSTRG…SMLMSPFVPS (144 aa)). 2 cysteine pairs are disulfide-bonded: cysteine 532–cysteine 559 and cysteine 547–cysteine 561. Residues 532-577 (CVFWDFSQLQWSNAGCQLVNETLDTVLCRCSHLTSFSMLMSPFVPS) are GPS. Residues 566-574 (SFSMLMSPF) are stachel. A helical membrane pass occupies residues 589–609 (IGLSISIASLILCLIIESLFW). The Cytoplasmic segment spans residues 610-622 (KQTKRSQTSYTRN). A helical membrane pass occupies residues 623–643 (ICLVNIAVSLLIADVWFIIAA). Topologically, residues 644–658 (TVDPSVSPSGVCVAA) are extracellular. A disulfide bond links cysteine 655 and cysteine 731. A helical transmembrane segment spans residues 659 to 679 (VFFTHFFYLAVFFWMLVLGIL). Residues 680–697 (LAYRIILVFHHMALTTMM) are Cytoplasmic-facing. The helical transmembrane segment at 698 to 718 (AIGFCLGYGCPLLISIITLAV) threads the bilayer. The Extracellular portion of the chain corresponds to 719-742 (TQPSNSYKRNDVCWLNWSDKSKPL). N-linked (GlcNAc...) asparagine glycosylation occurs at asparagine 734. The helical transmembrane segment at 743–763 (LAFVVPALTIVAVNLVVVLLV) threads the bilayer. Topologically, residues 764–789 (LRKLWRPAVGERLNQDDKATAIRMGK) are cytoplasmic. The helical transmembrane segment at 790 to 810 (SLLVLTPLLGLTWGFGIGTMA) threads the bilayer. Over 811–818 (NSHNLAWH) the chain is Extracellular. Residues 819 to 839 (VLFALLNAFQGFFIFCFGILL) traverse the membrane as a helical segment. At 840–908 (DTKLRQLLSN…ITLTQFLSTE (69 aa)) the chain is on the cytoplasmic side.

This sequence belongs to the G-protein coupled receptor 2 family. Adhesion G-protein coupled receptor (ADGR) subfamily. As to quaternary structure, heterodimer of 2 chains generated by proteolytic processing; the large extracellular N-terminal fragment and the membrane-bound C-terminal fragment predominantly remain associated and non-covalently linked. In terms of processing, autoproteolytically processed at the GPS region of the GAIN-B domain; this cleavage modulates receptor activity. In terms of tissue distribution, expressed in liver, kidney and adrenal gland. In kidney strong expression in the renal pelvis and the ureter.

Its subcellular location is the cell membrane. With respect to regulation, forms a heterodimer of 2 chains generated by proteolytic processing that remain associated through non-covalent interactions mediated by the GAIN-B domain. In the inactivated receptor, the Stachel sequence (also named stalk) is embedded in the GAIN-B domain, where it adopts a beta-strand conformation. On activation, the Stachel moves into the 7 transmembrane region and adopts a twisted hook-shaped configuration that forms contacts within the receptor, leading to coupling of a G-alpha protein, which activates signaling. The cleaved GAIN-B and N-terminal domains can then dissociate from the rest of the receptor. Adhesion G-protein coupled receptor (aGPCR) for N-docosahexaenoylethanolamine (synaptamide), an omega-3 fatty acid lipid highly enriched in the brain. Ligand binding causes a conformation change that triggers signaling via guanine nucleotide-binding proteins (G proteins) and modulates the activity of downstream effectors, such as adenylate cyclase. ADGRF1 is coupled to G(s) G proteins and mediates activation of adenylate cyclase activity. Also able to couple to G(q), G(i) and G(12)/G(13) G proteins; additional evidence is however required to confirm this result in vivo. Involved in the development of neurons and cognitive function. In liver, involved in fat accumulation. The polypeptide is Adhesion G-protein coupled receptor F1 (Mus musculus (Mouse)).